The following is a 396-amino-acid chain: NADH-quinone oxidoreductase subunit D (396 aa).

This sequence belongs to the complex I 49 kDa subunit family. As to quaternary structure, NDH-1 is composed of 14 different subunits. Subunits NuoB, C, D, E, F, and G constitute the peripheral sector of the complex.

The protein localises to the cell inner membrane. The catalysed reaction is a quinone + NADH + 5 H(+)(in) = a quinol + NAD(+) + 4 H(+)(out). Its function is as follows. NDH-1 shuttles electrons from NADH, via FMN and iron-sulfur (Fe-S) centers, to quinones in the respiratory chain. The immediate electron acceptor for the enzyme in this species is believed to be ubiquinone. Couples the redox reaction to proton translocation (for every two electrons transferred, four hydrogen ions are translocated across the cytoplasmic membrane), and thus conserves the redox energy in a proton gradient. In Methylobacterium radiotolerans (strain ATCC 27329 / DSM 1819 / JCM 2831 / NBRC 15690 / NCIMB 10815 / 0-1), this protein is NADH-quinone oxidoreductase subunit D.